Consider the following 1132-residue polypeptide: Protein CROWDED NUCLEI 1 (1132 aa).

The tract at residues 1–31 (MSTPLKVWQRWSTPTKATNPDSNGSSHGTGL) is disordered. Over residues 10 to 28 (RWSTPTKATNPDSNGSSHG) the composition is skewed to polar residues. The stretch at 73-714 (LLIEKKEWSS…KKLKEQREQF (642 aa)) forms a coiled coil. 2 short sequence motifs (nuclear localization signal) span residues 379-386 (EKREAEWK) and 693-700 (IRKDVDDL). Phosphoserine is present on residues Ser-774 and Ser-803. The segment covering 849–859 (AESETGTKEVE) has biased composition (basic and acidic residues). Disordered stretches follow at residues 849–871 (AESE…DQSD), 883–909 (SLSN…TRSV), 924–1039 (INLY…VQQE), and 1061–1132 (GVST…FLTT). The span at 861–871 (TNVNSDGDQSD) shows a compositional bias: polar residues. Residues Ser-865 and Ser-883 each carry the phosphoserine modification. Over residues 895-907 (MKGKGKARTRRTR) the composition is skewed to basic residues. At Ser-908 the chain carries Phosphoserine. Ser-1093, Ser-1105, and Ser-1112 each carry phosphoserine. The segment covering 1095–1105 (DVNKTPLRADS) has biased composition (basic and acidic residues).

It belongs to the CRWN family. In terms of assembly, core component of the LINC complex which is composed of inner nuclear membrane SUN domain-containing proteins coupled to outer nuclear membrane WIP and WIT proteins. The LINC complex also involves nucleoskeletal proteins CRWN/LINC and possibly KAKU4 and the cytoskeletal myosin KAKU1. Interacts with SUN1 and SUN2. Binds to KAKU4. As to expression, expressed at low levels in roots, leaves, flowers and flower stalks.

Its subcellular location is the nucleus membrane. The protein localises to the nucleus. It is found in the nucleoplasm. The protein resides in the nucleus lamina. Component of SUN-protein-containing multivariate complexes also called LINC complexes which link the nucleoskeleton and cytoskeleton by providing versatile outer nuclear membrane attachment sites for cytoskeletal filaments. Required for nucleus structure organization (e.g. size and shape). This is Protein CROWDED NUCLEI 1 from Arabidopsis thaliana (Mouse-ear cress).